Consider the following 147-residue polypeptide: UPF0306 protein YhbP (147 aa).

Belongs to the UPF0306 family.

This is UPF0306 protein YhbP from Salmonella arizonae (strain ATCC BAA-731 / CDC346-86 / RSK2980).